Here is a 98-residue protein sequence, read N- to C-terminus: MLETVPVRCVERKITSLVVDLSGVPIVDTMVAQQLYNLSKTLFLLGVKAVFSGIRPDVAQTSIQLGLDFSEYETYGTLKQALENMGVRCIVEELEENK.

In terms of domain architecture, STAS spans 1–85 (MLETVPVRCV…GTLKQALENM (85 aa)).

In terms of processing, phosphorylated on threonine residue(s). Phosphorylated by PrkC and dephosphorylated by PrpC.

It localises to the cytoplasm. This is an uncharacterized protein from Bacillus subtilis (strain 168).